A 184-amino-acid chain; its full sequence is Peptidoglycan-recognition protein SC2 (184 aa).

Residues 1–20 (MANKALILLAVLFCAQAVLG) form the signal peptide. Residues 45–169 (SYAVIHHTAG…RQVGSTECPG (125 aa)) form the N-acetylmuramoyl-L-alanine amidase domain. A Zn(2+)-binding site is contributed by H50. An intrachain disulfide couples C57 to C63. H159 and C167 together coordinate Zn(2+).

Belongs to the N-acetylmuramoyl-L-alanine amidase 2 family. Zn(2+) serves as cofactor.

It localises to the secreted. The enzyme catalyses Hydrolyzes the link between N-acetylmuramoyl residues and L-amino acid residues in certain cell-wall glycopeptides.. N-acetylmuramyl-L-alanine amidase involved in innate immunity by degrading bacterial peptidoglycans (PGN). Probably plays a scavenger role by digesting biologically active PGN into biologically inactive fragments. Has no direct bacteriolytic activity. In Drosophila simulans (Fruit fly), this protein is Peptidoglycan-recognition protein SC2 (PGRP-SC2).